A 232-amino-acid chain; its full sequence is Small ribosomal subunit protein uS3 (232 aa).

The region spanning 39-107 (VRQFLTKELA…PAQINIAEVR (69 aa)) is the KH type-2 domain.

It belongs to the universal ribosomal protein uS3 family. As to quaternary structure, part of the 30S ribosomal subunit. Forms a tight complex with proteins S10 and S14.

In terms of biological role, binds the lower part of the 30S subunit head. Binds mRNA in the 70S ribosome, positioning it for translation. This Yersinia pseudotuberculosis serotype O:1b (strain IP 31758) protein is Small ribosomal subunit protein uS3.